Consider the following 516-residue polypeptide: Circadian clock oscillator protein KaiC (516 aa).

KaiC domains are found at residues 1–244 and 258–516; these read MNQP…INIF and ARIS…TLPE. The ATP site is built by Gly46, Thr47, Gly48, Lys49, Thr50, Leu51, Ser86, Lys221, Leu222, Arg223, Thr225, His227, Thr237, Thr287, Gly288, Thr289, Gly290, Lys291, Thr292, and Leu293. Thr50 contributes to the Mg(2+) binding site. A Mg(2+)-binding site is contributed by Thr292. A Mg(2+)-binding site is contributed by Glu315. ATP is bound at residue Trp328. Residue Ser428 is modified to Phosphoserine; by autocatalysis. A Phosphothreonine; by autocatalysis modification is found at Thr429. The ATP site is built by Arg448, Lys454, Met455, Arg456, Ser458, His460, and Lys462.

The protein belongs to the KaiC family. In terms of assembly, homohexamer; hexamerization is dependent on ATP-binding. The KaiABC complex composition changes during the circadian cycle to control KaiC phosphorylation. Complexes KaiC(6), KaiA(2-4):KaiC(6), KaiB(6):KaiC(6) and KaiC(6):KaiB(6):KaiA(12) are among the most important forms, many form cooperatively. KaiC interacts with SasA, activating its autokinase function and leading to RpaA activation. It depends on Mg(2+) as a cofactor. Phosphorylated on serine and threonine residues by autocatalysis. Has a 4 step phosphorylation cycle; the autokinase acts first on Thr-429, then Ser-428. When Ser-428 is modified KaiC switches to an autophosphatase mode, acting first on phospho-Thr-429 then phospho-Ser-428.

It carries out the reaction L-seryl-[protein] + ATP = O-phospho-L-seryl-[protein] + ADP + H(+). It catalyses the reaction L-threonyl-[protein] + ATP = O-phospho-L-threonyl-[protein] + ADP + H(+). The catalysed reaction is ATP + H2O = ADP + phosphate + H(+). The interaction with KaiA enhances its phosphorylation status, while the interaction with KaiB decreases it. Functionally, central component of the KaiABC oscillator complex, which constitutes the main circadian regulator in cyanobacteria. Complex composition changes during the circadian cycle to control KaiC phosphorylation. KaiA stimulates KaiC autophosphorylation, while KaiB sequesters KaiA, leading to KaiC autodephosphorylation. Clock output pathways impact the RpaA transcriptional regulator. KaiC enhances the autophosphorylation activity of SasA, which then transfers its phosphate group to RpaA to activate it. KaiB and KaiC together enhance the phospho-RpaA dephosphatase activity of CikA. Has a weak, temperature-independent ATPase activity; ATPase activity defines the circadian period. The phosphorylation state of KaiC modulates its ATPase activity and effects KaiB binding. This is Circadian clock oscillator protein KaiC from Picosynechococcus sp. (strain ATCC 27264 / PCC 7002 / PR-6) (Agmenellum quadruplicatum).